A 166-amino-acid chain; its full sequence is Interleukin-3 (166 aa).

Residues 1–27 form the signal peptide; the sequence is MVLASSTTSILCMLLPLLMLFHQGLQI. Intrachain disulfides connect C43–C106 and C105–C166. Residues N60 and N70 are each glycosylated (N-linked (GlcNAc...) asparagine). The disordered stretch occupies residues 145–166; that stretch reads SVSRPPQPTSSSDNFRPMTVEC.

The protein belongs to the IL-3 family. As to quaternary structure, monomer. As to expression, activated T-cells, mast cells, natural killer cells.

It is found in the secreted. Cytokine secreted predominantly by activated T-lymphocytes as well as mast cells and osteoblastic cells that controls the production and differentiation of hematopoietic progenitor cells into lineage-restricted cells. Also stimulates mature basophils, eosinophils, and monocytes to become functionally activated. In addition, plays an important role in neural cell proliferation and survival. Participates as well in bone homeostasis and inhibits osteoclast differentiation by preventing NF-kappa-B nuclear translocation and activation. Mechanistically, exerts its biological effects through a receptor composed of IL3RA subunit and a signal transducing subunit IL3RB. Receptor stimulation results in the rapid activation of JAK2 kinase activity leading to STAT5-mediated transcriptional program. Alternatively, contributes to cell survival under oxidative stress in non-hematopoietic systems by activating pathways mediated by PI3K/AKT and ERK. The chain is Interleukin-3 (Il3) from Rattus norvegicus (Rat).